Here is a 240-residue protein sequence, read N- to C-terminus: Histidinol dehydrogenase homolog oryD (240 aa).

Zn(2+)-binding residues include Q64 and H67. E134 serves as the catalytic Proton acceptor. The Zn(2+) site is built by D168 and H228.

This sequence belongs to the histidinol dehydrogenase family. Requires Zn(2+) as cofactor.

It functions in the pathway secondary metabolite biosynthesis. Functionally, histidinol dehydrogenase homolog; part of the gene cluster that mediates the biosynthesis of oryzines, natural products with an unusual maleidride backbone. The two subunits of the fungal fatty acid synthase oryfasA and oryfasB probably form octenoic acid. This fatty acid is most likely activated by the acyl-CoA ligase oryP to give octenyl-CoA before the citrate synthase-like protein oryE catalyzes condensation with oxaloacetate to form tricarboxylic acid. The next steps of the pathways are conjectural, but a favorite possible route has been proposed, beginning with decarboxylation and concomitant dehydration by the decarboxylase oryM, followed by tautomerization, which may lead to the production of a diene intermediate. Reduction of this diene intermediate could give the known metabolite piliformic acid. On the pathway to oryzine B and oryzine A, however, hydroxylation of the diene by the alpha-ketoglutarate-dependent dioxygenase oryG and lactonisation by the lactonohydrolases oryH or oryL could give oryzine B directly. Finally, enoyl reduction by the dehydrogenase oryD would then convert oryzine B into oryzine A. The protein is Histidinol dehydrogenase homolog oryD of Aspergillus oryzae (strain ATCC 42149 / RIB 40) (Yellow koji mold).